Reading from the N-terminus, the 504-residue chain is Maturase K (504 aa).

This sequence belongs to the intron maturase 2 family. MatK subfamily.

The protein localises to the plastid. It localises to the chloroplast. Functionally, usually encoded in the trnK tRNA gene intron. Probably assists in splicing its own and other chloroplast group II introns. In Pachira aquatica (Guiana chestnut), this protein is Maturase K.